A 468-amino-acid polypeptide reads, in one-letter code: Factor XIIa inhibitor (468 aa).

The signal sequence occupies residues 1–23; it reads MASRLTPLTLLLLLLLAGDRVTS. A disordered region spans residues 27–60; it reads VGPGNLQEGESEGDSQKGGILDGESIQGNEDSPT. N-linked (GlcNAc...) asparagine glycans are attached at residues Asn-65, Asn-176, Asn-227, and Asn-326. Intrachain disulfides connect Cys-97–Cys-396 and Cys-104–Cys-179.

This sequence belongs to the serpin family. Post-translationally, N- and O-glycosylated.

It localises to the secreted. Its function is as follows. May play a potentially crucial role in regulating important physiological pathways including complement activation, blood coagulation, fibrinolysis and the generation of kinins. The protein is Factor XIIa inhibitor of Bos taurus (Bovine).